Reading from the N-terminus, the 827-residue chain is Lon protease 2 (827 aa).

The interval 1–22 (MSDEKKKGSAASAMPTAMAPPG) is disordered. The span at 9-21 (SAASAMPTAMAPP) shows a compositional bias: low complexity. Positions 33–227 (LPILPLRNSV…LVLELLNRKR (195 aa)) constitute a Lon N-terminal domain. 379–386 (GPPGVGKT) provides a ligand contact to ATP. Residues 615–796 (TEVPGVATGL…DDVLKAALET (182 aa)) form the Lon proteolytic domain. Catalysis depends on residues serine 702 and lysine 745. The tract at residues 799 to 827 (VGVAGTPGGEPGKEAPLPKPAESAPEVRA) is disordered.

Belongs to the peptidase S16 family. In terms of assembly, homohexamer. Organized in a ring with a central cavity.

Its subcellular location is the cytoplasm. It catalyses the reaction Hydrolysis of proteins in presence of ATP.. Its function is as follows. ATP-dependent serine protease that mediates the selective degradation of mutant and abnormal proteins as well as certain short-lived regulatory proteins. Required for cellular homeostasis and for survival from DNA damage and developmental changes induced by stress. Degrades polypeptides processively to yield small peptide fragments that are 5 to 10 amino acids long. Binds to DNA in a double-stranded, site-specific manner. The protein is Lon protease 2 of Myxococcus xanthus.